A 240-amino-acid chain; its full sequence is 4-hydroxy-tetrahydrodipicolinate reductase (240 aa).

Residues 79–81 (ATT) and 103–106 (SANM) contribute to the NAD(+) site. Residue His135 is the Proton donor/acceptor of the active site. His136 serves as a coordination point for (S)-2,3,4,5-tetrahydrodipicolinate. The active-site Proton donor is Lys139. Residue 145 to 146 (GT) participates in (S)-2,3,4,5-tetrahydrodipicolinate binding.

It belongs to the DapB family.

The protein localises to the cytoplasm. It catalyses the reaction (S)-2,3,4,5-tetrahydrodipicolinate + NAD(+) + H2O = (2S,4S)-4-hydroxy-2,3,4,5-tetrahydrodipicolinate + NADH + H(+). The catalysed reaction is (S)-2,3,4,5-tetrahydrodipicolinate + NADP(+) + H2O = (2S,4S)-4-hydroxy-2,3,4,5-tetrahydrodipicolinate + NADPH + H(+). It participates in amino-acid biosynthesis; L-lysine biosynthesis via DAP pathway; (S)-tetrahydrodipicolinate from L-aspartate: step 4/4. Functionally, catalyzes the conversion of 4-hydroxy-tetrahydrodipicolinate (HTPA) to tetrahydrodipicolinate. The protein is 4-hydroxy-tetrahydrodipicolinate reductase of Staphylococcus aureus (strain MSSA476).